Reading from the N-terminus, the 3418-residue chain is Breast cancer type 2 susceptibility protein (3418 aa).

Positions 1–40 (MPIGSKERPTFFEIFKTRCNKADLGPISLNWFEELSSEAP) are interaction with PALB2. The segment at 37–68 (SEAPPYNSEPAEESEHKNNNYEPNLFKTPQRK) is disordered. Position 70 is a phosphoserine (Ser-70). A disordered region spans residues 358 to 381 (VEPNDTDPLDSNVANQKPFESGSD). Ser-445, Ser-492, and Ser-755 each carry phosphoserine. The interval 639–1000 (LHSSVKRSCS…NKWAGLLGPI (362 aa)) is interaction with NPM1. 6 BRCA2 repeats span residues 1002–1036 (NHSF…DIEE), 1212–1246 (NEVG…DIEN), 1421–1455 (FETS…QKPE), 1517–1551 (KEPT…EKEQ), 1664–1698 (IENS…EGIF), and 1837–1871 (FEVG…DSFS). Positions 1003 to 2082 (HSFGGSFRTA…LHKVKGVLEE (1080 aa)) are interaction with RAD51. The interval 1338–1781 (GSDSSKNDTV…IEPVLKNVED (444 aa)) is interaction with POLH. The interval 1410–1595 (TATKTEQNIK…TAAPKCKEMQ (186 aa)) is required for stimulation of POLH DNA polymerization activity. Ser-1970 bears the Phosphoserine mark. Residues 1971 to 2005 (SANTCGIFSTASGKSVQVSDASLQNARQVFSEIED) form a BRCA2 7 repeat. Thr-2035 is modified (phosphothreonine). One copy of the BRCA2 8 repeat lies at 2051 to 2085 (NSSAFSGFSTASGKQVSILESSLHKVKGVLEEFDL). Ser-2095 carries the phosphoserine modification. An interaction with HSF2BP region spans residues 2270-2337 (GKRRGEPLIL…EPITCVPFRT (68 aa)). The interaction with FANCD2 stretch occupies residues 2350–2545 (TAPGQEFLSK…SHKQLYTYGV (196 aa)). The segment at 2430 to 2450 (ENRQKQNIDGHGSDDSKNKIN) is disordered. Positions 2481–2832 (ITSLQNARDI…QRAYPIQWME (352 aa)) are interaction with SEM1. A Nuclear export signal; masked by interaction with SEM1 motif is present at residues 2682-2698 (AAKTLVLCVSDIISLSA). Ser-3291 bears the Phosphoserine; by CDK1 and CDK2 mark. Position 3319 is a phosphoserine (Ser-3319). Phosphothreonine; by CHEK1 and CHEK2 is present on Thr-3387. Residues 3393–3418 (EQESSQASTEECEKNKQDTITTKKYI) are disordered.

Monomer and dimer. Interacts with RAD51; regulates RAD51 recruitment and function at sites of DNA repair. Interacts with WDR16, USP11, DMC1, ROCK2 and NPM1. Interacts with SEM1; the interaction masks a nuclear export signal in BRCA2. Interacts with both nonubiquitinated and monoubiquitinated FANCD2; this complex also includes XRCC3 and phosphorylated FANCG. Part of a BRCA complex containing BRCA1, BRCA2 and PALB2. Component of the homologous recombination repair (HR) complex composed of ERCC5/XPG, BRCA2, PALB2, DSS1 and RAD51. Within the complex, interacts with ERCC5/XPG and PALB2. Interacts directly with PALB2 which may serve as a scaffold for a HR complex containing PALB2, BRCA2, RAD51C, RAD51 and XRCC3. Interacts with BRCA1 only in the presence of PALB2 which serves as the bridging protein. Interacts with POLH; the interaction is direct. Interacts with the TREX-2 complex subunits PCID2 and SEM1. Interacts with HSF2BP and BRME1; the interaction with HSF2BP is direct and allows the formation of a ternary complex. The complex BRME1:HSF2BP:BRCA2 interacts with SPATA22, MEIOB and RAD51. In terms of processing, phosphorylated by ATM upon irradiation-induced DNA damage. Phosphorylation by CHEK1 and CHEK2 regulates interaction with RAD51. Phosphorylation at Ser-3291 by CDK1 and CDK2 is low in S phase when recombination is active, but increases as cells progress towards mitosis; this phosphorylation prevents homologous recombination-dependent repair during S phase and G2 by inhibiting RAD51 binding. Ubiquitinated in the absence of DNA damage; this does not lead to proteasomal degradation. In contrast, ubiquitination in response to DNA damage leads to proteasomal degradation. In terms of tissue distribution, highest levels of expression in breast and thymus, with slightly lower levels in lung, ovary and spleen.

The protein resides in the nucleus. The protein localises to the cytoplasm. It localises to the cytoskeleton. Its subcellular location is the microtubule organizing center. It is found in the centrosome. In terms of biological role, involved in double-strand break repair and/or homologous recombination. Binds RAD51 and potentiates recombinational DNA repair by promoting assembly of RAD51 onto single-stranded DNA (ssDNA). Acts by targeting RAD51 to ssDNA over double-stranded DNA, enabling RAD51 to displace replication protein-A (RPA) from ssDNA and stabilizing RAD51-ssDNA filaments by blocking ATP hydrolysis. Part of a PALB2-scaffolded HR complex containing RAD51C and which is thought to play a role in DNA repair by HR. May participate in S phase checkpoint activation. Binds selectively to ssDNA, and to ssDNA in tailed duplexes and replication fork structures. May play a role in the extension step after strand invasion at replication-dependent DNA double-strand breaks; together with PALB2 is involved in both POLH localization at collapsed replication forks and DNA polymerization activity. In concert with NPM1, regulates centrosome duplication. Interacts with the TREX-2 complex (transcription and export complex 2) subunits PCID2 and SEM1, and is required to prevent R-loop-associated DNA damage and thus transcription-associated genomic instability. Silencing of BRCA2 promotes R-loop accumulation at actively transcribed genes in replicating and non-replicating cells, suggesting that BRCA2 mediates the control of R-loop associated genomic instability, independently of its known role in homologous recombination. In Homo sapiens (Human), this protein is Breast cancer type 2 susceptibility protein.